The chain runs to 324 residues: Germination protease (324 aa).

Residues 1–10 (MIIVLGIRTD) constitute a propeptide that is removed on maturation.

It belongs to the peptidase A25 family. As to quaternary structure, homotetramer. In terms of processing, autoproteolytically processed. The inactive tetrameric zymogen termed p46 autoprocesses to a smaller form termed p41, which is active only during spore germination.

The enzyme catalyses Endopeptidase action with P4 Glu or Asp, P1 preferably Glu &gt; Asp, P1' hydrophobic and P2' Ala.. Initiates the rapid degradation of small, acid-soluble proteins during spore germination. This Caldanaerobacter subterraneus subsp. tengcongensis (strain DSM 15242 / JCM 11007 / NBRC 100824 / MB4) (Thermoanaerobacter tengcongensis) protein is Germination protease.